Consider the following 747-residue polypeptide: Probable copper-transporting ATPase PacS (747 aa).

Topologically, residues M1–S101 are cytoplasmic. An HMA domain is found at N3–F69. A metal cation is bound by residues C14 and C17. Residues G102 to P122 form a helical membrane-spanning segment. Residues G123–G132 lie on the Extracellular side of the membrane. Residues L133–N151 traverse the membrane as a helical segment. Residues A152–Q158 are Cytoplasmic-facing. A helical membrane pass occupies residues N159–L179. The Extracellular segment spans residues A180–Y199. The helical transmembrane segment at E200–K220 threads the bilayer. Residues G221 to Q348 are Cytoplasmic-facing. Residues V349–W371 form a helical membrane-spanning segment. Topologically, residues I372–A378 are extracellular. The chain crosses the membrane as a helical span at residues L379–L396. The Cytoplasmic segment spans residues A397–I688. D434 functions as the 4-aspartylphosphate intermediate in the catalytic mechanism. D634 and D638 together coordinate Mg(2+). A helical transmembrane segment spans residues R689 to G708. The Extracellular segment spans residues I709–P720. Residues M721–L739 form a helical membrane-spanning segment. Topologically, residues R740–R747 are cytoplasmic.

It belongs to the cation transport ATPase (P-type) (TC 3.A.3) family. Type IB subfamily.

The protein resides in the cell membrane. The enzyme catalyses Cu(+)(in) + ATP + H2O = Cu(+)(out) + ADP + phosphate + H(+). In terms of biological role, may play a role in the osmotic adaptation. The polypeptide is Probable copper-transporting ATPase PacS (pacS) (Synechococcus elongatus (strain ATCC 33912 / PCC 7942 / FACHB-805) (Anacystis nidulans R2)).